The sequence spans 933 residues: Isoleucine--tRNA ligase (933 aa).

A 'HIGH' region motif is present at residues 57–67 (PYANGNIHVGH). Glu-554 contacts L-isoleucyl-5'-AMP. A 'KMSKS' region motif is present at residues 595–599 (KMSKS). Lys-598 provides a ligand contact to ATP.

It belongs to the class-I aminoacyl-tRNA synthetase family. IleS type 1 subfamily. In terms of assembly, monomer.

The protein localises to the cytoplasm. It carries out the reaction tRNA(Ile) + L-isoleucine + ATP = L-isoleucyl-tRNA(Ile) + AMP + diphosphate. Catalyzes the attachment of isoleucine to tRNA(Ile). As IleRS can inadvertently accommodate and process structurally similar amino acids such as valine, to avoid such errors it has two additional distinct tRNA(Ile)-dependent editing activities. One activity is designated as 'pretransfer' editing and involves the hydrolysis of activated Val-AMP. The other activity is designated 'posttransfer' editing and involves deacylation of mischarged Val-tRNA(Ile). This chain is Isoleucine--tRNA ligase, found in Streptococcus pyogenes serotype M6 (strain ATCC BAA-946 / MGAS10394).